A 484-amino-acid chain; its full sequence is Ornithine decarboxylase (484 aa).

N6-(pyridoxal phosphate)lysine is present on K114. Pyridoxal 5'-phosphate contacts are provided by residues S245, G282, and 315–318 (EPGR). Residue 381–382 (FD) coordinates substrate. The active-site Proton donor; shared with dimeric partner is the C422. D423 lines the substrate pocket. Residue Y452 participates in pyridoxal 5'-phosphate binding.

Belongs to the Orn/Lys/Arg decarboxylase class-II family. In terms of assembly, homodimer. Only the dimer is catalytically active, as the active sites are constructed of residues from both monomers. Requires pyridoxal 5'-phosphate as cofactor.

Its subcellular location is the cytoplasm. It carries out the reaction L-ornithine + H(+) = putrescine + CO2. The protein operates within amine and polyamine biosynthesis; putrescine biosynthesis via L-ornithine pathway; putrescine from L-ornithine: step 1/1. Inhibited by antizyme (AZ) OAZ1 in response to polyamine levels. AZ inhibits the assembly of the functional homodimer by binding to ODC monomers and targeting them for ubiquitin-independent proteolytic destruction by the 26S proteasome. Catalyzes the first and rate-limiting step of polyamine biosynthesis that converts ornithine into putrescine, which is the precursor for the polyamines, spermidine and spermine. Polyamines are essential for cell proliferation and are implicated in cellular processes, ranging from DNA replication to apoptosis. The protein is Ornithine decarboxylase (spe-1) of Neurospora crassa (strain ATCC 24698 / 74-OR23-1A / CBS 708.71 / DSM 1257 / FGSC 987).